The following is a 212-amino-acid chain: Adenylate kinase (212 aa).

10–15 is an ATP binding site; that stretch reads GAGKGT. The interval 30–59 is NMP; the sequence is STGDMFRAAMANQTEMGRLAKSYIDKGELV. Residues threonine 31, arginine 36, 57–59, 86–89, and glutamine 93 each bind AMP; these read ELV and GYPR. The LID stretch occupies residues 127–159; that stretch reads GRIINRKTGETFHKVFNPPVDYKEEDYYQREDD. Residues arginine 128 and 137 to 138 each bind ATP; that span reads TF. AMP contacts are provided by arginine 156 and arginine 167. Glutamine 195 provides a ligand contact to ATP.

Belongs to the adenylate kinase family. Monomer.

The protein localises to the cytoplasm. It carries out the reaction AMP + ATP = 2 ADP. The protein operates within purine metabolism; AMP biosynthesis via salvage pathway; AMP from ADP: step 1/1. Catalyzes the reversible transfer of the terminal phosphate group between ATP and AMP. Plays an important role in cellular energy homeostasis and in adenine nucleotide metabolism. The polypeptide is Adenylate kinase (Streptococcus pyogenes serotype M3 (strain ATCC BAA-595 / MGAS315)).